The primary structure comprises 379 residues: Tryptophan 2,3-dioxygenase (379 aa).

Residues Phe57 to His61 and Arg128 each bind substrate. His312 serves as a coordination point for heme. Thr327 lines the substrate pocket.

It belongs to the tryptophan 2,3-dioxygenase family. Homotetramer. Dimer of dimers. The cofactor is heme.

It carries out the reaction L-tryptophan + O2 = N-formyl-L-kynurenine. Its pathway is amino-acid degradation; L-tryptophan degradation via kynurenine pathway; L-kynurenine from L-tryptophan: step 1/2. It participates in pigment biosynthesis; ommochrome biosynthesis. Functionally, heme-dependent dioxygenase that catalyzes the oxidative cleavage of the L-tryptophan (L-Trp) pyrrole ring and converts L-tryptophan to N-formyl-L-kynurenine. Catalyzes the oxidative cleavage of the indole moiety. Required during larval growth to control the level of potentially harmful free tryptophan in the hemolymph. In the adult the same reaction is the first step in the ommochrome biosynthetic pathway. This is Tryptophan 2,3-dioxygenase from Drosophila melanogaster (Fruit fly).